Consider the following 250-residue polypeptide: 3-deoxy-manno-octulosonate cytidylyltransferase (250 aa).

Belongs to the KdsB family.

It localises to the cytoplasm. The catalysed reaction is 3-deoxy-alpha-D-manno-oct-2-ulosonate + CTP = CMP-3-deoxy-beta-D-manno-octulosonate + diphosphate. It participates in nucleotide-sugar biosynthesis; CMP-3-deoxy-D-manno-octulosonate biosynthesis; CMP-3-deoxy-D-manno-octulosonate from 3-deoxy-D-manno-octulosonate and CTP: step 1/1. The protein operates within bacterial outer membrane biogenesis; lipopolysaccharide biosynthesis. Activates KDO (a required 8-carbon sugar) for incorporation into bacterial lipopolysaccharide in Gram-negative bacteria. The polypeptide is 3-deoxy-manno-octulosonate cytidylyltransferase (Syntrophotalea carbinolica (strain DSM 2380 / NBRC 103641 / GraBd1) (Pelobacter carbinolicus)).